A 316-amino-acid polypeptide reads, in one-letter code: 4-hydroxyphenylacetate decarboxylase activating enzyme (316 aa).

The Radical SAM core domain maps to 20-307; it reads HDGPGCRTTV…QDIFLDNGIA (288 aa). Residues C34, C38, C41, C60, C66, C69, and C105 each contribute to the [4Fe-4S] cluster site. 40-42 contacts S-adenosyl-L-methionine; sequence WCA. Residues 84-115 form the 4Fe-4S ferredoxin-type domain; it reads NKPVIDWNICKDCESFECVNSCYYNAFKLCAK. S-adenosyl-L-methionine-binding positions include G144, 193 to 195, and H267; that span reads DIK.

This sequence belongs to the organic radical-activating enzymes family. In terms of assembly, monomer. It depends on [4Fe-4S] cluster as a cofactor.

The catalysed reaction is glycyl-[protein] + reduced [flavodoxin] + S-adenosyl-L-methionine = glycin-2-yl radical-[protein] + semiquinone [flavodoxin] + 5'-deoxyadenosine + L-methionine + H(+). Functionally, catalyzes activation of 4-hydroxyphenylacetate decarboxylase under anaerobic conditions by generation of an organic free radical on a glycine residue, via a homolytic cleavage of S-adenosyl-L-methionine (SAM). This is 4-hydroxyphenylacetate decarboxylase activating enzyme from Clostridioides difficile (strain 630) (Peptoclostridium difficile).